Here is a 675-residue protein sequence, read N- to C-terminus: Putative methyl-accepting chemotaxis AlkN (675 aa).

The next 2 helical transmembrane spans lie at 24–44 and 303–323; these read IALY…FLLS and FPSV…FFII. The HAMP domain maps to 343-394; it reads QRNQAAILRLLDELGDLADGDLTVQATVTEDFTGAIADSINYSIDQLRNLVQ. The Methyl-accepting transducer domain occupies 399–635; that stretch reads SAVQVASAAQ…HISNTMNVIQ (237 aa).

This sequence belongs to the methyl-accepting chemotaxis (MCP) protein family.

Its subcellular location is the membrane. It functions in the pathway hydrocarbon metabolism; alkane degradation. Chemotactic-signal transducers respond to changes in the concentration of attractants and repellents in the environment, transduce a signal from the outside to the inside of the cell, and facilitate sensory adaptation through the variation of the level of methylation. The sequence is that of Putative methyl-accepting chemotaxis AlkN from Alcanivorax borkumensis (strain ATCC 700651 / DSM 11573 / NCIMB 13689 / SK2).